The primary structure comprises 153 residues: 6,7-dimethyl-8-ribityllumazine synthase (153 aa).

5-amino-6-(D-ribitylamino)uracil is bound by residues Phe-21, Ala-55–Glu-57, and Thr-79–Ile-81. Ala-84 to Thr-85 contacts (2S)-2-hydroxy-3-oxobutyl phosphate. The active-site Proton donor is His-87. Phe-112 is a 5-amino-6-(D-ribitylamino)uracil binding site. (2S)-2-hydroxy-3-oxobutyl phosphate is bound at residue Arg-126.

Belongs to the DMRL synthase family. Forms an icosahedral capsid composed of 60 subunits, arranged as a dodecamer of pentamers.

The catalysed reaction is (2S)-2-hydroxy-3-oxobutyl phosphate + 5-amino-6-(D-ribitylamino)uracil = 6,7-dimethyl-8-(1-D-ribityl)lumazine + phosphate + 2 H2O + H(+). Its pathway is cofactor biosynthesis; riboflavin biosynthesis; riboflavin from 2-hydroxy-3-oxobutyl phosphate and 5-amino-6-(D-ribitylamino)uracil: step 1/2. Its function is as follows. Catalyzes the formation of 6,7-dimethyl-8-ribityllumazine by condensation of 5-amino-6-(D-ribitylamino)uracil with 3,4-dihydroxy-2-butanone 4-phosphate. This is the penultimate step in the biosynthesis of riboflavin. The polypeptide is 6,7-dimethyl-8-ribityllumazine synthase (Bacillus cereus (strain ATCC 10987 / NRS 248)).